Here is a 278-residue protein sequence, read N- to C-terminus: Large ribosomal subunit protein uL2 (278 aa).

3 disordered regions span residues 1–20 (MAIR…SVSD), 25–57 (TRST…RGGG), and 224–278 (VVMN…GKKR). Basic residues-rich tracts occupy residues 45 to 57 (AHGR…RGGG) and 269 to 278 (VRRRKTGKKR).

The protein belongs to the universal ribosomal protein uL2 family. Part of the 50S ribosomal subunit. Forms a bridge to the 30S subunit in the 70S ribosome.

Functionally, one of the primary rRNA binding proteins. Required for association of the 30S and 50S subunits to form the 70S ribosome, for tRNA binding and peptide bond formation. It has been suggested to have peptidyltransferase activity; this is somewhat controversial. Makes several contacts with the 16S rRNA in the 70S ribosome. The protein is Large ribosomal subunit protein uL2 of Nocardia farcinica (strain IFM 10152).